The primary structure comprises 437 residues: Anhydromevalonate phosphate decarboxylase (437 aa).

Mn(2+)-binding residues include asparagine 136 and glutamate 199. The active-site Proton acceptor is aspartate 247.

This sequence belongs to the UbiD family. It depends on prenylated FMN as a cofactor. Mn(2+) is required as a cofactor.

The catalysed reaction is (2E)-3-methyl-5-phosphooxypent-2-enoate + H(+) = isopentenyl phosphate + CO2. The protein operates within isoprenoid biosynthesis; isopentenyl diphosphate biosynthesis via mevalonate pathway. In terms of biological role, catalyzes the conversion of trans-anhydromevalonate 5-phosphate (tAHMP) into isopentenyl phosphate. Involved in the archaeal mevalonate (MVA) pathway, which provides fundamental precursors for isoprenoid biosynthesis, such as isopentenyl diphosphate (IPP) and dimethylallyl diphosphate (DMAPP). This Aeropyrum pernix (strain ATCC 700893 / DSM 11879 / JCM 9820 / NBRC 100138 / K1) protein is Anhydromevalonate phosphate decarboxylase.